The primary structure comprises 199 residues: Probable nicotinate-nucleotide adenylyltransferase (199 aa).

Belongs to the NadD family.

It catalyses the reaction nicotinate beta-D-ribonucleotide + ATP + H(+) = deamido-NAD(+) + diphosphate. It functions in the pathway cofactor biosynthesis; NAD(+) biosynthesis; deamido-NAD(+) from nicotinate D-ribonucleotide: step 1/1. In terms of biological role, catalyzes the reversible adenylation of nicotinate mononucleotide (NaMN) to nicotinic acid adenine dinucleotide (NaAD). The sequence is that of Probable nicotinate-nucleotide adenylyltransferase from Roseiflexus castenholzii (strain DSM 13941 / HLO8).